The sequence spans 396 residues: UPF0164 protein TP_0858 (396 aa).

The signal sequence occupies residues 1–28; it reads MGTMIRHTFTHRCGALLCALALGSSTMA.

This sequence belongs to the UPF0164 family.

In Treponema pallidum (strain Nichols), this protein is UPF0164 protein TP_0858.